We begin with the raw amino-acid sequence, 317 residues long: MWLYLVALVGLWTLLRFFRVRQVVSHLQDKYVFITGCDSGFGTLLARQLDRRGMRVLAACLTEKGAEELRNKTSDRLETVILDVTKTESIVTATQWVKEHVGNRGLWGLVNNAGISTPSGPNEWMKKQDFAHVLDVNLLGMIEVTLSMLPLVRKARGRVVNVSSVMGRVSLFGGGYCISKYGVEAFSDSLRRELSYFGVKVAIIEPGFFLTGVTSSARLCSNTQMLWDQTSSEIREIYGEKYLASYLKRLNKLDKRCNKDLSGVTDCMEHALTACHPRTRYSAGWDAKLFYLPLSYLPTFLVDALLYWTSLKPEKAL.

Residue 33–57 (FITGCDSGFGTLLARQLDRRGMRVL) participates in NAD(+) binding. Tyr-176 functions as the Proton acceptor in the catalytic mechanism. A helical transmembrane segment spans residues 289-309 (LFYLPLSYLPTFLVDALLYWT).

It belongs to the short-chain dehydrogenases/reductases (SDR) family. Homodimer. Not glycosylated.

The protein localises to the endoplasmic reticulum membrane. It localises to the microsome membrane. It catalyses the reaction all-trans-retinol--[retinol-binding protein] + NAD(+) = all-trans-retinal--[retinol-binding protein] + NADH + H(+). The catalysed reaction is 9-cis-retinol + NAD(+) = 9-cis-retinal + NADH + H(+). It carries out the reaction 11-cis-retinol + NAD(+) = 11-cis-retinal + NADH + H(+). The enzyme catalyses 13-cis-retinol + NAD(+) = 13-cis-retinal + NADH + H(+). It catalyses the reaction androsterone + NAD(+) = 5alpha-androstan-3,17-dione + NADH + H(+). The catalysed reaction is 5alpha-androstane-3alpha,17beta-diol + NAD(+) = 17beta-hydroxy-5alpha-androstan-3-one + NADH + H(+). Its pathway is cofactor metabolism; retinol metabolism. In terms of biological role, oxidoreductase with a preference for NAD. Oxidizes all-trans-retinol, 9-cis-retinol, 11-cis-retinol and 13-cis-retinol to the corresponding aldehydes. Has higher activity towards CRBP-bound retinol than with free retinol. Oxidizes 3-alpha-hydroxysteroids. Oxidizes androstanediol and androsterone to dihydrotestosterone and androstanedione. Can also catalyze the reverse reaction. This chain is Retinol dehydrogenase 16, found in Mus musculus (Mouse).